We begin with the raw amino-acid sequence, 185 residues long: A-type ATP synthase subunit E (185 aa).

It belongs to the V-ATPase E subunit family. As to quaternary structure, has multiple subunits with at least A(3), B(3), C, D, E, F, H, I and proteolipid K(x).

It is found in the cell membrane. Functionally, component of the A-type ATP synthase that produces ATP from ADP in the presence of a proton gradient across the membrane. This Thermoplasma volcanium (strain ATCC 51530 / DSM 4299 / JCM 9571 / NBRC 15438 / GSS1) protein is A-type ATP synthase subunit E.